Reading from the N-terminus, the 243-residue chain is Type II restriction enzyme NlaIV (243 aa).

The catalysed reaction is Endonucleolytic cleavage of DNA to give specific double-stranded fragments with terminal 5'-phosphates.. Functionally, a P subtype restriction enzyme that recognizes the double-stranded sequence 5'-GGNNCC-3' and cleaves after N-3. This Neisseria lactamica protein is Type II restriction enzyme NlaIV (nlaIVR).